The chain runs to 535 residues: Peptide chain release factor 3 (535 aa).

In terms of domain architecture, tr-type G spans 8–276 (ARRRTFAIIS…ALVEQAPPPG (269 aa)). GTP contacts are provided by residues 17–24 (SHPDAGKT), 85–89 (DTPGH), and 139–142 (NKMD).

Belongs to the TRAFAC class translation factor GTPase superfamily. Classic translation factor GTPase family. PrfC subfamily.

It is found in the cytoplasm. In terms of biological role, increases the formation of ribosomal termination complexes and stimulates activities of RF-1 and RF-2. It binds guanine nucleotides and has strong preference for UGA stop codons. It may interact directly with the ribosome. The stimulation of RF-1 and RF-2 is significantly reduced by GTP and GDP, but not by GMP. This chain is Peptide chain release factor 3, found in Bordetella petrii (strain ATCC BAA-461 / DSM 12804 / CCUG 43448).